A 654-amino-acid polypeptide reads, in one-letter code: MTSMDIPYSQISSFVNSSFFQKVSQLKLNKYRLDDTDKAIVGSVDFKFIGKNQPTSLSVDESSFNDNITYTHAQFPVKGILKNLNTVEDFRKVDKNEFLQSQGLVVHKSIQDRSCLKDLSKLTQFFILSFSDLKGFKFIYWFGFPSLVSRWKVNKLSGLTESQIEPYESKLNEWLNARLPIEQKQAFIIDNLEFKPFEQLSSFSPDDQLNIGFIDTSSILNKCSTQLRNILYMLAYYGFENIKVYNFRFNNTTSFTLDITLAEPLTSEPKTTGWERTAQGKLGPKLADIGALVDPARLADQSVDLNLKLMKWRVMPELDLDIIKNSKVLLLGAGTLGSYVSRVLLGYGVRHITFVDNGKVSFSNPVRQPLFNFTDCLEGGAPKAETAAKALKLIFPLITSQGYNLEVPMAGHPVTDEKRQYEDYQRLVTLIKEHDVVFLLMDSRETRWLPTVLCNVFDKICITAALGFDSYLVMRHGNLFNTEHIEAEENSHRLGCYFCNDIIAPKDSTTDRTLDQMCTVTRPGVALLASSLAAELFVSILQHPLKSHAPASLHDNATVLGCLPQQLRGFLHNFETSKLEANNYEYCSACSIQVLNEYKSRTWDFVKDALNENNYLEDLTGLTKVKQESEIAEKKFQEFENGLEFSDEDSEWIN.

The GXGXXG motif motif lies at 332 to 337; it reads GAGTLG. The Glycyl thioester intermediate role is filled by C518. Positions 615–654 are homodimerization; the sequence is YLEDLTGLTKVKQESEIAEKKFQEFENGLEFSDEDSEWIN.

The protein belongs to the ATG7 family. As to quaternary structure, homodimer. Interacts with ATG8 through a thioester bond between Cys-518 and the C-terminal 'Gly-116' of ATG8.

It localises to the cytoplasm. It is found in the preautophagosomal structure. In terms of biological role, E1-like activating enzyme involved in the 2 ubiquitin-like systems required for cytoplasm to vacuole transport (Cvt) and autophagy. Activates ATG12 for its conjugation with ATG5 and ATG8 for its conjugation with phosphatidylethanolamine. Both systems are needed for the ATG8 association to Cvt vesicles and autophagosomes membranes. Autophagy is essential for maintenance of amino acid levels and protein synthesis under nitrogen starvation. Required for selective autophagic degradation of the nucleus (nucleophagy) as well as for mitophagy which contributes to regulate mitochondrial quantity and quality by eliminating the mitochondria to a basal level to fulfill cellular energy requirements and preventing excess ROS production. Plays a role in the regulation of filamentous growth and chronological longevity. Involved in glucose-induced micropexophagy. This is Ubiquitin-like modifier-activating enzyme ATG7 (ATG7) from Komagataella pastoris (Yeast).